The primary structure comprises 498 residues: Protein flp (498 aa).

The next 4 helical transmembrane spans lie at 6–26 (LYFLSISIIILVAISIAIHIT), 389–409 (FNIVTVLMTTLILLAFIFSAY), 433–453 (LTLCLCIAIALILYALPYLIL), and 471–491 (LALITTLIALFSTLIVILLFL).

Its subcellular location is the cell membrane. Its precise function is unknown. Has no penicillin-binding activity and is not involved in methicillin resistance. This chain is Protein flp (flp), found in Staphylococcus aureus (strain MW2).